We begin with the raw amino-acid sequence, 325 residues long: Glycine--tRNA ligase alpha subunit (325 aa).

The protein belongs to the class-II aminoacyl-tRNA synthetase family. In terms of assembly, tetramer of two alpha and two beta subunits.

It localises to the cytoplasm. It catalyses the reaction tRNA(Gly) + glycine + ATP = glycyl-tRNA(Gly) + AMP + diphosphate. The sequence is that of Glycine--tRNA ligase alpha subunit from Ralstonia nicotianae (strain ATCC BAA-1114 / GMI1000) (Ralstonia solanacearum).